The following is a 313-amino-acid chain: Probable cytochrome c oxidase subunit 2 (313 aa).

The region spanning 5–51 is the RPE1 insert domain; that stretch reads RYWSKQSYKKLKVDQEHNTTEYTNVCNSTSLGSTYTLPLKMELWKIY. 3 helical membrane-spanning segments follow: residues 39–59, 94–114, and 131–151; these read YTLPLKMELWKIYITLIYFLI, LLYIGTAIVLFVAGLLGFVCI, and LLIEIIWTVIPIIILVIIAVP. H233, C268, C272, and H276 together coordinate Cu cation.

This sequence belongs to the cytochrome c oxidase subunit 2 family. Requires Cu cation as cofactor. It depends on heme as a cofactor.

The protein resides in the cell membrane. The catalysed reaction is 4 Fe(II)-[cytochrome c] + O2 + 8 H(+)(in) = 4 Fe(III)-[cytochrome c] + 2 H2O + 4 H(+)(out). Functionally, subunits I and II form the functional core of the enzyme complex. Electrons originating in cytochrome c are transferred via heme a and Cu(A) to the binuclear center formed by heme a3 and Cu(B). The chain is Probable cytochrome c oxidase subunit 2 (ctaC) from Rickettsia prowazekii (strain Madrid E).